Consider the following 116-residue polypeptide: Ribosome-binding factor A (116 aa).

It belongs to the RbfA family. As to quaternary structure, monomer. Binds 30S ribosomal subunits, but not 50S ribosomal subunits or 70S ribosomes.

The protein resides in the cytoplasm. One of several proteins that assist in the late maturation steps of the functional core of the 30S ribosomal subunit. Associates with free 30S ribosomal subunits (but not with 30S subunits that are part of 70S ribosomes or polysomes). Required for efficient processing of 16S rRNA. May interact with the 5'-terminal helix region of 16S rRNA. The protein is Ribosome-binding factor A of Streptococcus pyogenes serotype M28 (strain MGAS6180).